We begin with the raw amino-acid sequence, 750 residues long: Phosphoribosylformylglycinamidine synthase subunit PurL (750 aa).

The active site involves H54. 2 residues coordinate ATP: Y57 and K101. E103 provides a ligand contact to Mg(2+). Substrate-binding positions include 104-107 (SHNH) and R126. Residue H105 is the Proton acceptor of the active site. D127 contributes to the Mg(2+) binding site. Q251 provides a ligand contact to substrate. Residue D279 coordinates Mg(2+). Residue 323-325 (ESQ) participates in substrate binding. The ATP site is built by D509 and G546. N547 serves as a coordination point for Mg(2+). Position 549 (S549) interacts with substrate.

Belongs to the FGAMS family. In terms of assembly, monomer. Part of the FGAM synthase complex composed of 1 PurL, 1 PurQ and 2 PurS subunits.

Its subcellular location is the cytoplasm. It catalyses the reaction N(2)-formyl-N(1)-(5-phospho-beta-D-ribosyl)glycinamide + L-glutamine + ATP + H2O = 2-formamido-N(1)-(5-O-phospho-beta-D-ribosyl)acetamidine + L-glutamate + ADP + phosphate + H(+). Its pathway is purine metabolism; IMP biosynthesis via de novo pathway; 5-amino-1-(5-phospho-D-ribosyl)imidazole from N(2)-formyl-N(1)-(5-phospho-D-ribosyl)glycinamide: step 1/2. Part of the phosphoribosylformylglycinamidine synthase complex involved in the purines biosynthetic pathway. Catalyzes the ATP-dependent conversion of formylglycinamide ribonucleotide (FGAR) and glutamine to yield formylglycinamidine ribonucleotide (FGAM) and glutamate. The FGAM synthase complex is composed of three subunits. PurQ produces an ammonia molecule by converting glutamine to glutamate. PurL transfers the ammonia molecule to FGAR to form FGAM in an ATP-dependent manner. PurS interacts with PurQ and PurL and is thought to assist in the transfer of the ammonia molecule from PurQ to PurL. The chain is Phosphoribosylformylglycinamidine synthase subunit PurL from Cutibacterium acnes (strain DSM 16379 / KPA171202) (Propionibacterium acnes).